Consider the following 28-residue polypeptide: Conotoxin Cal6.43b (28 aa).

Cystine bridges form between cysteine 3–cysteine 13, cysteine 7–cysteine 19, and cysteine 12–cysteine 25.

In terms of tissue distribution, expressed by the venom duct.

The protein localises to the secreted. In terms of biological role, probable neurotoxin with unknown target. Possibly targets ion channels. The sequence is that of Conotoxin Cal6.43b from Californiconus californicus (California cone).